The chain runs to 343 residues: Glyceraldehyde-3-phosphate dehydrogenase (343 aa).

NAD(+) is bound by residues 12–13 and Gly114; that span reads SI. 143-145 contributes to the D-glyceraldehyde 3-phosphate binding site; the sequence is SCN. The active-site Nucleophile is Cys144. Residue Arg172 coordinates NAD(+). A D-glyceraldehyde 3-phosphate-binding site is contributed by 198-199; that stretch reads HG. Residue Gln307 coordinates NAD(+).

Belongs to the glyceraldehyde-3-phosphate dehydrogenase family. As to quaternary structure, homotetramer.

It is found in the cytoplasm. The catalysed reaction is D-glyceraldehyde 3-phosphate + phosphate + NADP(+) = (2R)-3-phospho-glyceroyl phosphate + NADPH + H(+). It carries out the reaction D-glyceraldehyde 3-phosphate + phosphate + NAD(+) = (2R)-3-phospho-glyceroyl phosphate + NADH + H(+). Its pathway is carbohydrate degradation; glycolysis; pyruvate from D-glyceraldehyde 3-phosphate: step 1/5. This chain is Glyceraldehyde-3-phosphate dehydrogenase (gap), found in Methanocaldococcus jannaschii (strain ATCC 43067 / DSM 2661 / JAL-1 / JCM 10045 / NBRC 100440) (Methanococcus jannaschii).